The primary structure comprises 233 residues: Small ribosomal subunit protein uS3 (233 aa).

A KH type-2 domain is found at 39–107; sequence VREFLKAKLK…PVHVNIEEVR (69 aa). Positions 209 to 233 are disordered; that stretch reads PGQVSAEPTQPEKKMRKGGRNAAAN.

This sequence belongs to the universal ribosomal protein uS3 family. As to quaternary structure, part of the 30S ribosomal subunit. Forms a tight complex with proteins S10 and S14.

Binds the lower part of the 30S subunit head. Binds mRNA in the 70S ribosome, positioning it for translation. The protein is Small ribosomal subunit protein uS3 of Laribacter hongkongensis (strain HLHK9).